We begin with the raw amino-acid sequence, 484 residues long: MERQVQRLRQTFRSGRSRPLRFRLQQLEALRRMVQEREKDILAAIAADLSKSELNAYSHEVITILGEIDFMLGNLPELASARPAKKNLLTMMDEAYVQPEPLGVVLIIGAWNYPFVLTLQPLVGAIAAGNAAIVKPSELSENTAKILAELLPQYLDQDLYMIVNGGVEETTELLRQRFDHILYTGNTAVGKIVMEAAAKHLTPVTLELGGKSPCYIDRDCDLDVACRRITWGKYMNCGQTCIAPDYILCEASSQDQIVQKIKDTVKDFYGENVKASPDYERIINLRHFKRIKSLLEGQKIAFGGETDEATRYIAPTILTDVDPNSKVMQEEIFGPILPIVSVKNVEEAINFINDREKPLALYIFSHNNKLIKRVIDETSSGGVTGNDVIMHFTVNSLPFGGVGASGMGAYHGKYSFDTFSHQRPCLLKGLKGESVNKLRYPPNSESKVSWSKFFLLKQFNKGRLQLLLLVCLVAVAAVIVKDQL.

Residues 1 to 463 (MERQVQRLRQ…FLLKQFNKGR (463 aa)) are Cytoplasmic-facing. NAD(+) is bound at residue 185–190 (GNTAVG). Residues E207 and C241 contribute to the active site. S293 bears the Phosphoserine mark. A helical transmembrane segment spans residues 464–484 (LQLLLLVCLVAVAAVIVKDQL). The Prevents secretion from ER motif lies at 481–484 (KDQL).

It belongs to the aldehyde dehydrogenase family. In terms of assembly, homodimer. In terms of processing, the N-terminus is blocked.

The protein localises to the microsome membrane. The protein resides in the endoplasmic reticulum membrane. The enzyme catalyses an aldehyde + NAD(+) + H2O = a carboxylate + NADH + 2 H(+). It catalyses the reaction a fatty aldehyde + NAD(+) + H2O = a fatty acid + NADH + 2 H(+). The catalysed reaction is (2E)-hexadecenal + NAD(+) + H2O = (E)-hexadec-2-enoate + NADH + 2 H(+). It carries out the reaction hexadecanoate + NADH + 2 H(+) = hexadecanal + NAD(+) + H2O. The enzyme catalyses 22-oxodocosanoate + NAD(+) + H2O = docosanedioate + NADH + 2 H(+). It catalyses the reaction 2,6,10,14-tetramethylpentadecanal + NAD(+) + H2O = 2,6,10,14-tetramethylpentadecanoate + NADH + 2 H(+). The catalysed reaction is octadecanal + NAD(+) + H2O = octadecanoate + NADH + 2 H(+). It carries out the reaction dodecanoate + NADH + 2 H(+) = dodecanal + NAD(+) + H2O. The enzyme catalyses decanal + NAD(+) + H2O = decanoate + NADH + 2 H(+). It catalyses the reaction tetradecanal + NAD(+) + H2O = tetradecanoate + NADH + 2 H(+). The catalysed reaction is octanal + NAD(+) + H2O = octanoate + NADH + 2 H(+). It carries out the reaction heptanal + NAD(+) + H2O = heptanoate + NADH + 2 H(+). The enzyme catalyses (2E,6E)-farnesal + NAD(+) + H2O = (2E,6E)-farnesoate + NADH + 2 H(+). Catalyzes the oxidation of medium and long-chain aliphatic aldehydes to fatty acids. Active on a variety of saturated and unsaturated aliphatic aldehydes between 6 and 24 carbons in length. Responsible for conversion of the sphingosine 1-phosphate (S1P) degradation product hexadecenal to hexadecenoic acid. The sequence is that of Aldehyde dehydrogenase family 3 member A2 (Aldh3a2) from Rattus norvegicus (Rat).